Consider the following 87-residue polypeptide: Cell division topological specificity factor (87 aa).

Belongs to the MinE family.

In terms of biological role, prevents the cell division inhibition by proteins MinC and MinD at internal division sites while permitting inhibition at polar sites. This ensures cell division at the proper site by restricting the formation of a division septum at the midpoint of the long axis of the cell. This Clostridium botulinum (strain ATCC 19397 / Type A) protein is Cell division topological specificity factor.